A 1244-amino-acid polypeptide reads, in one-letter code: Putative late blight resistance protein homolog R1A-4 (1244 aa).

Coiled-coil stretches lie at residues 411–434 (RYSD…ESLQ) and 526–548 (PRMN…QLLN). One can recognise an NB-ARC domain in the interval 527-755 (RMNEEIVGFK…ECWEQVANDL (229 aa)). Residue 560–567 (GMPGLGKT) participates in ATP binding. LRR repeat units follow at residues 978–1004 (LWNL…VWDM), 1079–1103 (PIRL…ISAP), 1127–1150 (LKNL…KVSN), 1153–1178 (FPQL…AFPN), and 1213–1237 (ESVV…NFKL).

This sequence belongs to the disease resistance NB-LRR family.

It localises to the cytoplasm. The protein resides in the membrane. Its function is as follows. Confers resistance to late blight (Phytophthora infestans) races carrying the avirulence gene Avr1. Resistance proteins guard the plant against pathogens that contain an appropriate avirulence protein via an indirect interaction with this avirulence protein. That triggers a defense system including the hypersensitive response, which restricts the pathogen growth. This Solanum demissum (Wild potato) protein is Putative late blight resistance protein homolog R1A-4 (R1A-4).